The chain runs to 522 residues: Na(+)/H(+) antiporter NhaB (522 aa).

Helical transmembrane passes span Phe-13–Pro-33, Leu-98–Phe-118, Ala-140–Val-160, Phe-239–Leu-259, Ala-304–Leu-324, Leu-356–Ile-376, Leu-390–Val-410, Ala-446–Ile-466, and Ala-477–Val-497.

This sequence belongs to the NhaB Na(+)/H(+) (TC 2.A.34) antiporter family.

The protein localises to the cell inner membrane. It carries out the reaction 2 Na(+)(in) + 3 H(+)(out) = 2 Na(+)(out) + 3 H(+)(in). Its function is as follows. Na(+)/H(+) antiporter that extrudes sodium in exchange for external protons. This Yersinia pestis bv. Antiqua (strain Angola) protein is Na(+)/H(+) antiporter NhaB.